A 96-amino-acid polypeptide reads, in one-letter code: Small ribosomal subunit protein bS16m (96 aa).

It belongs to the bacterial ribosomal protein bS16 family. In terms of assembly, component of the mitochondrial small ribosomal subunit (mt-SSU). Mature yeast 74S mitochondrial ribosomes consist of a small (37S) and a large (54S) subunit. The 37S small subunit contains a 15S ribosomal RNA (15S mt-rRNA) and at least 32 different proteins. The 54S large subunit contains a 21S rRNA (21S mt-rRNA) and at least 45 different proteins.

Its subcellular location is the mitochondrion. In terms of biological role, component of the mitochondrial ribosome (mitoribosome), a dedicated translation machinery responsible for the synthesis of mitochondrial genome-encoded proteins, including at least some of the essential transmembrane subunits of the mitochondrial respiratory chain. The mitoribosomes are attached to the mitochondrial inner membrane and translation products are cotranslationally integrated into the membrane. This chain is Small ribosomal subunit protein bS16m (mrps16), found in Schizosaccharomyces pombe (strain 972 / ATCC 24843) (Fission yeast).